We begin with the raw amino-acid sequence, 132 residues long: UPF0212 protein PYRAB08340 (132 aa).

It belongs to the UPF0212 family.

The protein is UPF0212 protein PYRAB08340 of Pyrococcus abyssi (strain GE5 / Orsay).